Reading from the N-terminus, the 466-residue chain is cAMP-dependent protein kinase regulatory subunit (466 aa).

The dimerization and phosphorylation stretch occupies residues 25-231 (QFAANYFTKR…RLEKAVGKNF (207 aa)). Over residues 71–80 (ASLSHGSSKA) the composition is skewed to low complexity. Disordered regions lie at residues 71-90 (ASLS…ISSS), 109-139 (STHI…PGIF), 154-179 (NSSV…VVNP), and 193-218 (SVSG…KSPE). Residues 81–90 (NASQSGISSS) are compositionally biased toward polar residues. A compositionally biased stretch (basic and acidic residues) spans 109–118 (STHIVDHLDS). Serine 193 bears the Phosphoserine mark. Basic and acidic residues predominate over residues 200-218 (QPDHLDDWKPENFQEKSPE). 3',5'-cyclic AMP-binding positions include 232 to 347 (LFNK…LLKN), glutamate 297, arginine 306, 350 to 466 (ILKS…RSKH), glutamate 416, and arginine 425.

The protein belongs to the cAMP-dependent kinase regulatory chain family. In terms of assembly, tetramer, composed of 2 regulatory (R) and 2 catalytic (C) subunits. In the presence of cAMP it dissociates into 2 active monomeric C subunits and an R dimer.

This Kluyveromyces lactis (strain ATCC 8585 / CBS 2359 / DSM 70799 / NBRC 1267 / NRRL Y-1140 / WM37) (Yeast) protein is cAMP-dependent protein kinase regulatory subunit (PKAR).